The primary structure comprises 251 residues: L-xylulose reductase (251 aa).

13–42 (LVTGASQGIGKEICLSLAKAGAQVIAFARN) contacts NADP(+). Substrate is bound at residue serine 143. The Proton acceptor role is filled by tyrosine 156. Lysine 160 provides a ligand contact to NADP(+).

It belongs to the short-chain dehydrogenases/reductases (SDR) family. Homotetramer. In terms of tissue distribution, expressed in intestine, gonad and spermatids (at protein level). Expressed in intestine, uterine seam, gonadal sheath cells, spermathecal-uterus valve and spermatids.

The protein resides in the cell membrane. It catalyses the reaction xylitol + NADP(+) = L-xylulose + NADPH + H(+). Strongly inhibited by 10% dimethyl sulfoxide. Functionally, catalyzes the NADPH-dependent reduction of L-xylulose, D-xylulose, L-(+) erythrulose, D-erythrose, D-threose, L-ribulose, 1,4-dibromo-2,3-butanedione and 2,3-heptanedione. Also active against isatin, 9,10-phenanthrenequinone, menadione, 2,3-hexaenadione and 3,4-hexahenadione. No activity observed when tested using NADH rather than NADPH. The sequence is that of L-xylulose reductase from Caenorhabditis elegans.